A 226-amino-acid chain; its full sequence is ATP synthase F(0) complex subunit a (226 aa).

A run of 6 helical transmembrane segments spans residues 6-26 (FASF…IVLF), 68-88 (WTLM…LGLL), 97-117 (QLSM…ITGF), 138-158 (IPML…ALAV), 164-184 (ITAG…LMSI), and 200-222 (TILE…SLYL).

This sequence belongs to the ATPase A chain family. As to quaternary structure, component of the ATP synthase complex composed at least of ATP5F1A/subunit alpha, ATP5F1B/subunit beta, ATP5MC1/subunit c (homooctomer), MT-ATP6/subunit a, MT-ATP8/subunit 8, ATP5ME/subunit e, ATP5MF/subunit f, ATP5MG/subunit g, ATP5MK/subunit k, ATP5MJ/subunit j, ATP5F1C/subunit gamma, ATP5F1D/subunit delta, ATP5F1E/subunit epsilon, ATP5PF/subunit F6, ATP5PB/subunit b, ATP5PD/subunit d, ATP5PO/subunit OSCP. ATP synthase complex consists of a soluble F(1) head domain (subunits alpha(3) and beta(3)) - the catalytic core - and a membrane F(0) domain - the membrane proton channel (subunits c, a, 8, e, f, g, k and j). These two domains are linked by a central stalk (subunits gamma, delta, and epsilon) rotating inside the F1 region and a stationary peripheral stalk (subunits F6, b, d, and OSCP). Interacts with DNAJC30; interaction is direct.

It is found in the mitochondrion inner membrane. It catalyses the reaction H(+)(in) = H(+)(out). Subunit a, of the mitochondrial membrane ATP synthase complex (F(1)F(0) ATP synthase or Complex V) that produces ATP from ADP in the presence of a proton gradient across the membrane which is generated by electron transport complexes of the respiratory chain. ATP synthase complex consist of a soluble F(1) head domain - the catalytic core - and a membrane F(1) domain - the membrane proton channel. These two domains are linked by a central stalk rotating inside the F(1) region and a stationary peripheral stalk. During catalysis, ATP synthesis in the catalytic domain of F(1) is coupled via a rotary mechanism of the central stalk subunits to proton translocation. With the subunit c (ATP5MC1), forms the proton-conducting channel in the F(0) domain, that contains two crucial half-channels (inlet and outlet) that facilitate proton movement from the mitochondrial intermembrane space (IMS) into the matrix. Protons are taken up via the inlet half-channel and released through the outlet half-channel, following a Grotthuss mechanism. This Bos mutus grunniens (Wild yak) protein is ATP synthase F(0) complex subunit a.